The following is a 503-amino-acid chain: ATP synthase subunit alpha (503 aa).

Glycine 170–threonine 177 contacts ATP.

The protein belongs to the ATPase alpha/beta chains family. F-type ATPases have 2 components, CF(1) - the catalytic core - and CF(0) - the membrane proton channel. CF(1) has five subunits: alpha(3), beta(3), gamma(1), delta(1), epsilon(1). CF(0) has three main subunits: a(1), b(2) and c(9-12). The alpha and beta chains form an alternating ring which encloses part of the gamma chain. CF(1) is attached to CF(0) by a central stalk formed by the gamma and epsilon chains, while a peripheral stalk is formed by the delta and b chains.

The protein localises to the cell inner membrane. The catalysed reaction is ATP + H2O + 4 H(+)(in) = ADP + phosphate + 5 H(+)(out). Produces ATP from ADP in the presence of a proton gradient across the membrane. The alpha chain is a regulatory subunit. This is ATP synthase subunit alpha from Thermotoga neapolitana (strain ATCC 49049 / DSM 4359 / NBRC 107923 / NS-E).